The sequence spans 206 residues: MRPLTPRQAEILELIKRNIADTGMPPTRAEIAKRLGFKSANAAEEHLKALAKKGCIEIIPGTSRGIRLTQANESEEELGLPLIGQVAAGEPILAQEHVEQHYQIDPAMFRPSADFLLRVRGDSMKNIGILEGDLLAVHKAEQARNGQVVVARVEDDVTVKRFEKKGSIVYLHAENEDYSPIVVDLTSESLSIEGLAVGVIRNGDWQ.

The H-T-H motif DNA-binding region spans 28 to 48; sequence RAEIAKRLGFKSANAAEEHLK. Residues serine 123 and lysine 160 each act as for autocatalytic cleavage activity in the active site.

Belongs to the peptidase S24 family. Homodimer.

It catalyses the reaction Hydrolysis of Ala-|-Gly bond in repressor LexA.. Functionally, represses a number of genes involved in the response to DNA damage (SOS response), including recA and lexA. In the presence of single-stranded DNA, RecA interacts with LexA causing an autocatalytic cleavage which disrupts the DNA-binding part of LexA, leading to derepression of the SOS regulon and eventually DNA repair. The sequence is that of LexA repressor from Shewanella sediminis (strain HAW-EB3).